A 500-amino-acid polypeptide reads, in one-letter code: L-arabinose isomerase (500 aa).

Mn(2+) contacts are provided by Glu-306, Glu-333, His-349, and His-448.

The protein belongs to the arabinose isomerase family. The cofactor is Mn(2+).

It carries out the reaction beta-L-arabinopyranose = L-ribulose. The protein operates within carbohydrate degradation; L-arabinose degradation via L-ribulose; D-xylulose 5-phosphate from L-arabinose (bacterial route): step 1/3. Catalyzes the conversion of L-arabinose to L-ribulose. The polypeptide is L-arabinose isomerase (Saccharophagus degradans (strain 2-40 / ATCC 43961 / DSM 17024)).